The following is a 546-amino-acid chain: Glucose-6-phosphate isomerase (546 aa).

Catalysis depends on E353, which acts as the Proton donor. Catalysis depends on residues H384 and K512.

This sequence belongs to the GPI family.

The protein resides in the cytoplasm. It carries out the reaction alpha-D-glucose 6-phosphate = beta-D-fructose 6-phosphate. The protein operates within carbohydrate biosynthesis; gluconeogenesis. Its pathway is carbohydrate degradation; glycolysis; D-glyceraldehyde 3-phosphate and glycerone phosphate from D-glucose: step 2/4. Catalyzes the reversible isomerization of glucose-6-phosphate to fructose-6-phosphate. The sequence is that of Glucose-6-phosphate isomerase from Methylococcus capsulatus (strain ATCC 33009 / NCIMB 11132 / Bath).